We begin with the raw amino-acid sequence, 245 residues long: Eukaryotic translation initiation factor 6 (245 aa).

This sequence belongs to the eIF-6 family. Monomer. Associates with the 60S ribosomal subunit.

It localises to the cytoplasm. The protein localises to the nucleus. The protein resides in the nucleolus. Its function is as follows. Binds to the 60S ribosomal subunit and prevents its association with the 40S ribosomal subunit to form the 80S initiation complex in the cytoplasm. May also be involved in ribosome biogenesis. In Ostreococcus lucimarinus (strain CCE9901), this protein is Eukaryotic translation initiation factor 6.